Here is a 175-residue protein sequence, read N- to C-terminus: ATP synthase subunit delta (175 aa).

The protein belongs to the ATPase delta chain family. In terms of assembly, F-type ATPases have 2 components, F(1) - the catalytic core - and F(0) - the membrane proton channel. F(1) has five subunits: alpha(3), beta(3), gamma(1), delta(1), epsilon(1). F(0) has three main subunits: a(1), b(2) and c(10-14). The alpha and beta chains form an alternating ring which encloses part of the gamma chain. F(1) is attached to F(0) by a central stalk formed by the gamma and epsilon chains, while a peripheral stalk is formed by the delta and b chains.

It localises to the cell membrane. Functionally, f(1)F(0) ATP synthase produces ATP from ADP in the presence of a proton or sodium gradient. F-type ATPases consist of two structural domains, F(1) containing the extramembraneous catalytic core and F(0) containing the membrane proton channel, linked together by a central stalk and a peripheral stalk. During catalysis, ATP synthesis in the catalytic domain of F(1) is coupled via a rotary mechanism of the central stalk subunits to proton translocation. This protein is part of the stalk that links CF(0) to CF(1). It either transmits conformational changes from CF(0) to CF(1) or is implicated in proton conduction. The polypeptide is ATP synthase subunit delta (Ruminiclostridium cellulolyticum (strain ATCC 35319 / DSM 5812 / JCM 6584 / H10) (Clostridium cellulolyticum)).